The primary structure comprises 3672 residues: Laminin-like protein epi-1 (3672 aa).

An N-terminal signal peptide occupies residues 1-27; it reads MSPYDSSPWATKALFLIVTLLAQFTYS. A Laminin N-terminal domain is found at 28–297; it reads QVLTPSQITI…AIKEIMIGGR (270 aa). 3 N-linked (GlcNAc...) asparagine glycosylation sites follow: N121, N140, and N249. 43 disulfide bridges follow: C298–C307, C300–C320, C322–C331, C334–C354, C357–C366, C359–C391, C394–C403, C406–C424, C427–C438, C429–C445, C447–C456, C459–C469, C472–C484, C474–C491, C493–C502, C505–C516, C519–C531, C521–C538, C540–C549, C552–C561, C564–C576, C566–C583, C585–C594, C597–C607, C610–C622, C612–C629, C631–C640, C643–C653, C656–C668, C658–C674, C676–C685, C688–C698, C701–C715, C703–C724, C726–C735, C738–C753, C756–C770, C758–C777, C779–C788, C791–C806, C809–C821, C811–C828, and C830–C839. Laminin EGF-like domains lie at 298-356, 357-426, 427-471, 472-518, 519-563, 564-609, 610-655, 656-700, 701-755, and 756-808; these read CVCN…TCEA, CNCF…PCKV, CDCD…KCKP, CECN…GCVE, CVCD…DCKF, CNCD…NCKA, CACD…DCRG, CECL…ICEE, CNCN…GCRS, and CDCN…GCES. A glycan (N-linked (GlcNAc...) asparagine) is linked at N351. A glycan (N-linked (GlcNAc...) asparagine) is linked at N477. N-linked (GlcNAc...) asparagine glycosylation is found at N511 and N530. N634 carries an N-linked (GlcNAc...) asparagine glycan. Residue N761 is glycosylated (N-linked (GlcNAc...) asparagine). The 31-residue stretch at 809–839 folds into the Laminin EGF-like 11; truncated domain; the sequence is CHCDIGGALRAECDITSGQCKCRPRVTGLRC. Residues N1014 and N1341 are each glycosylated (N-linked (GlcNAc...) asparagine). 16 disulfides stabilise this stretch: C1415–C1427, C1417–C1434, C1436–C1445, C1448–C1458, C1461–C1469, C1463–C1476, C1478–C1487, C1490–C1503, C1506–C1520, C1508–C1527, C1529–C1538, C1541–C1551, C1554–C1566, C1556–C1573, C1575–C1584, and C1587–C1602. Laminin EGF-like domains follow at residues 1415-1460, 1461-1505, 1506-1553, and 1554-1604; these read CDCV…ECIK, CQCN…GCQK, CGCH…HCYG, and CSCN…GCVN. A Laminin EGF-like 16; first part domain is found at 1605 to 1614; that stretch reads CFCFGVTDSC. Residues 1615–1796 enclose the Laminin IV type A domain; sequence RSSMYPVTIM…SVIKASSVEQ (182 aa). N1705 and N1756 each carry an N-linked (GlcNAc...) asparagine glycan. The region spanning 1797 to 1829 is the Laminin EGF-like 16; second part domain; the sequence is CQCPAPYTGPSCQLCASGYHRVQSGSFLGACVP. 24 cysteine pairs are disulfide-bonded: C1830–C1839, C1832–C1846, C1849–C1858, C1861–C1877, C1880–C1894, C1882–C1905, C1907–C1916, C1919–C1934, C1937–C1951, C1939–C1958, C1961–C1970, C1973–C1987, C1990–C2000, C1992–C2007, C2009–C2018, C2021–C2031, C2037–C2048, C2039–C2055, C2057–C2066, C2069–C2081, C2084–C2096, C2086–C2103, C2105–C2114, and C2117–C2129. Laminin EGF-like domains lie at 1830–1879, 1880–1936, 1937–1989, 1990–2036, 2037–2083, and 2084–2131; these read CECN…DCMA, CACP…SCSP, CQCN…NCSS, CECS…GCQG, CHCG…GCDK, and CDCE…GCRR. Residue N1868 is glycosylated (N-linked (GlcNAc...) asparagine). Residue N1944 is glycosylated (N-linked (GlcNAc...) asparagine). N1986 carries an N-linked (GlcNAc...) asparagine glycan. Residue N2002 is glycosylated (N-linked (GlcNAc...) asparagine). N-linked (GlcNAc...) asparagine glycans are attached at residues N2159, N2207, N2231, N2235, N2401, N2421, N2487, and N2821. Laminin G-like domains follow at residues 2693–2884, 2896–3066, and 3072–3235; these read GAHF…VNGA, ELVV…RSGC, and RTVS…LNGC. Cysteines 3040 and 3066 form a disulfide. N3087 is a glycosylation site (N-linked (GlcNAc...) asparagine). Residues C3209 and C3235 are joined by a disulfide bond. The disordered stretch occupies residues 3236-3294; that stretch reads SLSDDENISTTTTAAPKPTDDSDVAVLPIDEEEESTTTTTTTTTEEPTEEPAEARPDGH. The N-linked (GlcNAc...) asparagine glycan is linked to N3242. The span at 3271–3280 shows a compositional bias: low complexity; sequence TTTTTTTTTE. Laminin G-like domains are found at residues 3310–3482 and 3488–3669; these read GFNF…TEQC and PGMY…RNAC. C3460 and C3482 form a disulfide bridge. N3541 is a glycosylation site (N-linked (GlcNAc...) asparagine). A disulfide bridge links C3633 with C3669.

As to quaternary structure, laminin is a complex glycoprotein, consisting of three different polypeptide chains (alpha, beta, gamma), which are bound to each other by disulfide bonds into a cross-shaped molecule comprising one long and three short arms with globules at each end.

The protein localises to the secreted. Its subcellular location is the extracellular space. The protein resides in the extracellular matrix. It is found in the basement membrane. Binding to cells via a high affinity receptor, laminin is thought to mediate the attachment, migration and organization of cells into tissues during embryonic development by interacting with other extracellular matrix components. Required to assemble a stable basement membrane and for organizing receptor complexes and cytoskeletal components to the proper cell surfaces. During embryogenesis, does not require the presence of collagen type IV in order to associate with cell surfaces, prior to assembly of the prototypical basement membrane. During the formation of neuromuscular junctions at the larval stage, negatively regulates membrane protrusion from body wall muscles, probably downstream of the integrin complex formed by pat-2 and pat-3. Probably plays a distinct role from the related laminin subunit alpha lam-3. This is Laminin-like protein epi-1 (epi-1) from Caenorhabditis elegans.